A 94-amino-acid polypeptide reads, in one-letter code: MFTINAEVRKEQGKGASRRLRTANKFPAIIYGGSEAPIAIELDHDQVMNMQAKAEFYSEVLTLVVDGKEVKVKAQAVQRHAYKPKLTHIDFVRA.

The protein belongs to the bacterial ribosomal protein bL25 family. Part of the 50S ribosomal subunit; part of the 5S rRNA/L5/L18/L25 subcomplex. Contacts the 5S rRNA. Binds to the 5S rRNA independently of L5 and L18.

This is one of the proteins that binds to the 5S RNA in the ribosome where it forms part of the central protuberance. This is Large ribosomal subunit protein bL25 from Salmonella gallinarum (strain 287/91 / NCTC 13346).